We begin with the raw amino-acid sequence, 463 residues long: MAIAENYEDVLKGKYPAKAHAKKVAEWIIAKGGDKNGTIYLEAQKQKLNEDNDGEAPFRQRRYFFYLSGCELPDSYLTYEIATEKLTLFIPPVEPDEVIWSGLPMSPEEAKEKYDIDQCLTTKDVNAHLTSTSESAQSTIYAIPEQVSDHITFISYKEKEFKQLKPAIEYCRVIKSDYEIALIRKANIISTAAHEAVMKAASTAKNECELEAVFLKACVERNAKNQAYHSIVAAGEHAATLHYVHNAAPISDQNLLLLDAGCEVDCYASDITRTFPLKGKFTTESLAIYKIVLDMQHQCINALKEGVVWDSVHELAHKVAIKGLLELGILKGDAEEIFTKRISVAFFPHGLGHYLGMDTHDTGGNPNYADKDVMFRYLRTRGSLPERSVITVEPGVYFCRFIIEPYLKDEEKKKYIDESVLEKYWSVGGVRIEDNVLVTKNGFENLTPTPKEIDDITKLILST.

Asp259, Asp270, Glu393, and Glu433 together coordinate Mn(2+).

This sequence belongs to the peptidase M24B family. Mn(2+) is required as a cofactor.

It carries out the reaction Release of any N-terminal amino acid, including proline, that is linked to proline, even from a dipeptide or tripeptide.. Its function is as follows. Catalyzes the removal of a penultimate prolyl residue from the N-termini of peptides. This Pyrenophora tritici-repentis (strain Pt-1C-BFP) (Wheat tan spot fungus) protein is Probable Xaa-Pro aminopeptidase pepP (pepP).